The sequence spans 146 residues: Snaclec 1 (146 aa).

A signal peptide spans 1-23 (MGRFIFMSFGLLVVFLSLSGTGA). 3 disulfides stabilise this stretch: Cys-25-Cys-36, Cys-53-Cys-142, and Cys-119-Cys-134. The C-type lectin domain maps to 32-143 (YEGHCYRVFQ…CSRTYSFVCK (112 aa)).

This sequence belongs to the snaclec family. Heterodimer; disulfide-linked. Expressed by the venom gland.

It localises to the secreted. Functionally, interferes with one step of hemostasis (modulation of platelet aggregation, or coagulation cascade, for example). This Sistrurus catenatus edwardsii (Desert massasauga) protein is Snaclec 1.